Consider the following 267-residue polypeptide: Large ribosomal subunit protein uL4 (267 aa).

The protein belongs to the universal ribosomal protein uL4 family. Part of the 50S ribosomal subunit.

Functionally, one of the primary rRNA binding proteins, this protein initially binds near the 5'-end of the 23S rRNA. It is important during the early stages of 50S assembly. It makes multiple contacts with different domains of the 23S rRNA in the assembled 50S subunit and ribosome. Forms part of the polypeptide exit tunnel. This chain is Large ribosomal subunit protein uL4, found in Saccharolobus islandicus (strain M.16.27) (Sulfolobus islandicus).